We begin with the raw amino-acid sequence, 429 residues long: Adenylosuccinate synthetase (429 aa).

GTP-binding positions include 13-19 (GDEGKGK) and 41-43 (GHT). Asp14 serves as the catalytic Proton acceptor. 2 residues coordinate Mg(2+): Asp14 and Gly41. IMP is bound by residues 14–17 (DEGK), 39–42 (NAGH), Thr130, Arg144, Gln224, Thr239, and Arg303. His42 acts as the Proton donor in catalysis. A substrate-binding site is contributed by 299–305 (ATTGRAR). Residues Arg305, 331–333 (KLD), and 412–414 (STG) contribute to the GTP site.

This sequence belongs to the adenylosuccinate synthetase family. Homodimer. Mg(2+) serves as cofactor.

It localises to the cytoplasm. The enzyme catalyses IMP + L-aspartate + GTP = N(6)-(1,2-dicarboxyethyl)-AMP + GDP + phosphate + 2 H(+). It functions in the pathway purine metabolism; AMP biosynthesis via de novo pathway; AMP from IMP: step 1/2. Its function is as follows. Plays an important role in the de novo pathway of purine nucleotide biosynthesis. Catalyzes the first committed step in the biosynthesis of AMP from IMP. The sequence is that of Adenylosuccinate synthetase from Psychrobacter sp. (strain PRwf-1).